Consider the following 247-residue polypeptide: 5'-nucleotidase SurE (247 aa).

A divalent metal cation contacts are provided by aspartate 8, aspartate 9, serine 39, and asparagine 91.

Belongs to the SurE nucleotidase family. The cofactor is a divalent metal cation.

It is found in the cytoplasm. The enzyme catalyses a ribonucleoside 5'-phosphate + H2O = a ribonucleoside + phosphate. Its function is as follows. Nucleotidase that shows phosphatase activity on nucleoside 5'-monophosphates. The chain is 5'-nucleotidase SurE from Leptospira biflexa serovar Patoc (strain Patoc 1 / Ames).